A 297-amino-acid chain; its full sequence is MENLLSVENAILITGPTASGKSALAVELAKRYGGAVVNADSMQVYDTLRVLTARPSEEEMQGVPHHLYGHVPAGAAYSTGAWLRDVSALLPALKAAGQLPVFVGGTGLYFKALTGGLSDMPEIPEGLREELRMRLVAEGPEGLHAELEAIDPAMSASLNRQDGQRIVRALEVIKATGRSIAEFHRRLGPVLIDADEARKIVVLPDRAVLHARINGRFEKMLQQGAESEVRALLALGLPAVAPVMKAIGVSQITAMLKGEMTREEVLEKGAAATRQYAKRQMTWFRNQMDESWERLAP.

Glycine 15 to serine 22 lines the ATP pocket. Residue threonine 17–serine 22 coordinates substrate. Interaction with substrate tRNA stretches follow at residues aspartate 40 to glutamine 43 and glutamine 164 to arginine 168.

This sequence belongs to the IPP transferase family. As to quaternary structure, monomer. Mg(2+) serves as cofactor.

The enzyme catalyses adenosine(37) in tRNA + dimethylallyl diphosphate = N(6)-dimethylallyladenosine(37) in tRNA + diphosphate. Functionally, catalyzes the transfer of a dimethylallyl group onto the adenine at position 37 in tRNAs that read codons beginning with uridine, leading to the formation of N6-(dimethylallyl)adenosine (i(6)A). In Rhizobium etli (strain CIAT 652), this protein is tRNA dimethylallyltransferase.